We begin with the raw amino-acid sequence, 134 residues long: Small ribosomal subunit protein uS11 (134 aa).

This sequence belongs to the universal ribosomal protein uS11 family. In terms of assembly, part of the 30S ribosomal subunit. Interacts with proteins S7 and S18. Binds to IF-3.

Functionally, located on the platform of the 30S subunit, it bridges several disparate RNA helices of the 16S rRNA. Forms part of the Shine-Dalgarno cleft in the 70S ribosome. This is Small ribosomal subunit protein uS11 from Polaromonas sp. (strain JS666 / ATCC BAA-500).